The primary structure comprises 691 residues: MPAAAGDGLSESPSRFLAGEKPPVHLEETFLPACISNVSRETLRNFQHTKRVGSYLIGRKLGEGSFAKVREGLHVVTGEKVAIKVIDKKKAKKDTYVTKNLRREGQIQQMIRHPNITQLLDILETENSYYLVMELCPGGNLMHKIYEKKRLEEHEARKYIRQLILAVEHLHRAGVVHRDLKIENLLLDENNNIKLIDFGLSNCAGILGYSDPFSTQCGSPAYAAPELLARKKYGPKVDVWSIGVNMYAMLTGTLPFTVEPFSLRALYQKMVDKDMNPLPTHLSPAAISFLRSLLEPDPLKRPNIQQALANRWLNDNYHGKGLHTYPNRIHLEDLSQSVVLHMSEKLGYKHSDVINVILSNRACHTLAVYFLLNRKLEHYLVNMRKPDINDNVCHKNQFHQLEKYKMNKNSYEERRSKDLEKRGEPQQRPIQRKLDKCSPSHRQNACLTPQGHSNKGPVKERRSSKSERESFGGLSPFHEVRITKTGCMTSCSLEYLEMQSPDPRTPKIMRRQDSHSQETVNVNMGSRIRETHLNVVRSFESVNREDQIESLSPNHQYRVIGSPVSFSPRHSSERTLSPIFQFDNTSPSKSHFNQASFTYDDKSSPSSPESMSPTSPHSPSCNNNISGNLGSPNCVRSRGRFPMMGIGQMLRKRNQVVSPKGEKPLETRMPPLHQMSPGYASFNSSDMNGFC.

Residues 55–313 (YLIGRKLGEG…IQQALANRWL (259 aa)) enclose the Protein kinase domain. ATP-binding positions include 61–69 (LGEGSFAKV) and lysine 84. Aspartate 179 acts as the Proton acceptor in catalysis. The span at 406–425 (MNKNSYEERRSKDLEKRGEP) shows a compositional bias: basic and acidic residues. Disordered regions lie at residues 406-475 (MNKN…GGLS), 499-518 (QSPDPRTPKIMRRQDSHSQE), 580-640 (FQFD…SRGR), and 655-679 (QVVSPKGEKPLETRMPPLHQMSPGY). Positions 440-453 (SHRQNACLTPQGHS) are enriched in polar residues. A compositionally biased stretch (basic and acidic residues) spans 457–470 (PVKERRSSKSERES). Polar residues predominate over residues 582 to 597 (FDNTSPSKSHFNQASF). The segment covering 604–620 (SPSSPESMSPTSPHSPS) has biased composition (low complexity). Polar residues predominate over residues 621–631 (CNNNISGNLGS).

It belongs to the protein kinase superfamily. CAMK Ser/Thr protein kinase family. SNF1 subfamily.

The catalysed reaction is L-seryl-[protein] + ATP = O-phospho-L-seryl-[protein] + ADP + H(+). It catalyses the reaction L-threonyl-[protein] + ATP = O-phospho-L-threonyl-[protein] + ADP + H(+). The sequence is that of Hormonally up-regulated neu tumor-associated kinase homolog A (hunk-a) from Xenopus laevis (African clawed frog).